The following is an 84-amino-acid chain: Large ribosomal subunit protein bL27 (84 aa).

The tract at residues 1–22 is disordered; that stretch reads MAKTKAGGSTKNGRDSAGRRLG.

This sequence belongs to the bacterial ribosomal protein bL27 family.

The polypeptide is Large ribosomal subunit protein bL27 (Mesomycoplasma hyopneumoniae (strain 232) (Mycoplasma hyopneumoniae)).